We begin with the raw amino-acid sequence, 214 residues long: Thiamine-phosphate synthase (214 aa).

Residues 38–42 (QLREK) and N70 contribute to the 4-amino-2-methyl-5-(diphosphooxymethyl)pyrimidine site. Mg(2+)-binding residues include D71 and D90. Residues S109 and K138 each contribute to the 4-amino-2-methyl-5-(diphosphooxymethyl)pyrimidine site. G165 provides a ligand contact to 2-[(2R,5Z)-2-carboxy-4-methylthiazol-5(2H)-ylidene]ethyl phosphate.

The protein belongs to the thiamine-phosphate synthase family. Mg(2+) serves as cofactor.

It catalyses the reaction 2-[(2R,5Z)-2-carboxy-4-methylthiazol-5(2H)-ylidene]ethyl phosphate + 4-amino-2-methyl-5-(diphosphooxymethyl)pyrimidine + 2 H(+) = thiamine phosphate + CO2 + diphosphate. The enzyme catalyses 2-(2-carboxy-4-methylthiazol-5-yl)ethyl phosphate + 4-amino-2-methyl-5-(diphosphooxymethyl)pyrimidine + 2 H(+) = thiamine phosphate + CO2 + diphosphate. The catalysed reaction is 4-methyl-5-(2-phosphooxyethyl)-thiazole + 4-amino-2-methyl-5-(diphosphooxymethyl)pyrimidine + H(+) = thiamine phosphate + diphosphate. It functions in the pathway cofactor biosynthesis; thiamine diphosphate biosynthesis; thiamine phosphate from 4-amino-2-methyl-5-diphosphomethylpyrimidine and 4-methyl-5-(2-phosphoethyl)-thiazole: step 1/1. Functionally, condenses 4-methyl-5-(beta-hydroxyethyl)thiazole monophosphate (THZ-P) and 2-methyl-4-amino-5-hydroxymethyl pyrimidine pyrophosphate (HMP-PP) to form thiamine monophosphate (TMP). The chain is Thiamine-phosphate synthase from Caldanaerobacter subterraneus subsp. tengcongensis (strain DSM 15242 / JCM 11007 / NBRC 100824 / MB4) (Thermoanaerobacter tengcongensis).